A 289-amino-acid polypeptide reads, in one-letter code: MWRIYPRLRDRWRGLLDRRLSDPTVSVWPGPAPQPPARAYVPPTERKRFYQNVSISQGEGGFEINLDHRKLKTPQAKLFTVPSEALAIAVATEWDSQQDTIKFYTMHLTTLCNTSLDNPTQRSKDQLIRAAVKFLDTDTICYRVEEPETLVELQKNEWDPVIEWAEKRYGMEIGSSTSIMGPSIPTQTREVLTSHLSSYNMWALQGIEFVVAQLKSMLLTLGLIDLRLTVEQAVLLSRLEEEYQIQKWGNIEWAHDYELQELRARTAAGTLFVHLCSESSTVKHKLLQE.

The N-terminal 40 residues, 1-40, are a transit peptide targeting the mitochondrion; that stretch reads MWRIYPRLRDRWRGLLDRRLSDPTVSVWPGPAPQPPARAY. Lysine 133 is modified (N6-succinyllysine).

It belongs to the ATP12 family. Interacts with ATP5F1B; involved in the assembly of the F1 component of the mitochondrial ATP synthase (ATPase). Interacts with FMC1.

The protein resides in the mitochondrion inner membrane. In terms of biological role, plays a role in the assembly of the F1 component of the mitochondrial ATP synthase (ATPase). This chain is ATP synthase mitochondrial F1 complex assembly factor 2, found in Mus musculus (Mouse).